Consider the following 920-residue polypeptide: Dynamin-B (920 aa).

The disordered stretch occupies residues 65–84; that stretch reads NSNNNNNNNNNNKINKNNNN. The 295-residue stretch at 154–448 folds into the Dynamin-type G domain; it reads EITLPQIIVV…LTKHIRDTFP (295 aa). Positions 164–171 are G1 motif; the sequence is GSQSSGKS. 164-172 is a binding site for GTP; it reads GSQSSGKSS. The tract at residues 190 to 192 is G2 motif; that stretch reads VTR. The disordered stretch occupies residues 204–241; it reads TTSRNNVNENEDEDEDDNYYDNDNDDNSLEEWGEFGHT. A compositionally biased stretch (acidic residues) spans 212–236; that stretch reads ENEDEDEDDNYYDNDNDDNSLEEWG. The segment at 290 to 293 is G3 motif; sequence DLPG. The G4 motif stretch occupies residues 359-362; that stretch reads TKLD. Residues 359 to 365 and 390 to 393 contribute to the GTP site; these read TKLDLMD and NRSQ. The interval 389-392 is G5 motif; that stretch reads VNRS. The segment at 680–790 is disordered; sequence FQSTSSTSSS…EIQIQQQQQQ (111 aa). Low complexity-rich tracts occupy residues 681 to 705 and 724 to 751; these read QSTS…NSNP and QIKQ…QKQQ. The stretch at 724-751 forms a coiled coil; that stretch reads QIKQQQQQQQQQQQQSYQQQQQQQQKQQ. Pro residues predominate over residues 765 to 774; that stretch reads PPSPPSPPQP. The span at 775–790 shows a compositional bias: low complexity; the sequence is KQQQSHEIQIQQQQQQ. The GED domain maps to 825 to 916; sequence IYLLRRLLLA…SLSQSENSDL (92 aa).

Belongs to the TRAFAC class dynamin-like GTPase superfamily. Dynamin/Fzo/YdjA family.

The protein localises to the cytoplasm. In terms of biological role, enzyme hydrolyzing GTP. The sequence is that of Dynamin-B (dymB) from Dictyostelium discoideum (Social amoeba).